The primary structure comprises 371 residues: DNA replication and repair protein RecF (371 aa).

30–37 (GENAQGKT) contacts ATP.

Belongs to the RecF family.

It is found in the cytoplasm. The RecF protein is involved in DNA metabolism; it is required for DNA replication and normal SOS inducibility. RecF binds preferentially to single-stranded, linear DNA. It also seems to bind ATP. The protein is DNA replication and repair protein RecF of Staphylococcus haemolyticus (strain JCSC1435).